A 1168-amino-acid polypeptide reads, in one-letter code: MSINDQRLTRRVEDLYASDAQFAAASPNEAITQAIDQPGVALPQLIRMVMEGYADRPALGQRALRFVTDPDSGRTMVELLPRFETITYRELWARAGTLATALSAEPAIRPGDRVCVLGFNSVDYTTIDIALIRLGAVSVPLQTSAPVTGLRPIVTETEPTMIATSIDNLGDAVEVLAGHAPARLVVFDYHGKVDTHREAVEAARARLAGSVTIDTLAELIERGRALPATPIADSADDALALLIYTSGSTGAPKGAMYRESQVMSFWRKSSGWFEPSGYPSITLNFMPMSHVGGRQVLYGTLSNGGTAYFVAKSDLSTLFEDLALVRPTELCFVPRIWDMVFAEFHSEVDRRLVDGADRAALEAQVKAELRENVLGGRFVMALTGSAPISAEMTAWVESLLADVHLVEGYGSTEAGMVLNDGMVRRPAVIDYKLVDVPELGYFGTDQPYPRGELLVKTQTMFPGYYQRPDVTAEVFDPDGFYRTGDIMAKVGPDQFVYLDRRNNVLKLSQGEFIAVSKLEAVFGDSPLVRQIFIYGNSARAYPLAVVVPSGDALSRHGIENLKPVISESLQEVARAAGLQSYEIPRDFIIETTPFTLENGLLTGIRKLARPQLKKFYGERLERLYTELADSQSNELRELRQSGPDAPVLPTLCRAAAALLGSTAADVRPDAHFADLGGDSLSALSLANLLHEIFGVDVPVGVIVSPASDLRALADHIEAARTGVRRPSFASIHGRSATEVHASDLTLDKFIDAATLAAAPNLPAPSAQVRTVLLTGATGFLGRYLALEWLDRMDLVNGKLICLVRARSDEEAQARLDATFDSGDPYLVRHYRELGAGRLEVLAGDKGEADLGLDRVTWQRLADTVDLIVDPAALVNHVLPYSQLFGPNAAGTAELLRLALTGKRKPYIYTSTIAVGEQIPPEAFTEDADIRAISPTRRIDDSYANGYANSKWAGEVLLREAHEQCGLPVTVFRCDMILADTSYTGQLNLPDMFTRLMLSLAATGIAPGSFYELDAHGNRQRAHYDGLPVEFVAEAICTLGTHSPDRFVTYHVMNPYDDGIGLDEFVDWLNSPTSGSGCTIQRIADYGEWLQRFETSLRALPDRQRHASLLPLLHNYREPAKPICGSIAPTDQFRAAVQEAKIGPDKDIPHLTAAIIAKYISNLRLLGLL.

Residues histidine 290, serine 385, 407–408 (EG), threonine 412, aspartate 485, 497–500 (YLDR), lysine 506, and lysine 606 each bind AMP. The Carrier domain occupies 645-720 (APVLPTLCRA…ALADHIEAAR (76 aa)). Position 679 is an O-(pantetheine 4'-phosphoryl)serine (serine 679). Residues 777 to 780 (TGFL), arginine 804, arginine 814, 844 to 845 (DK), 870 to 872 (PAA), serine 910, tyrosine 946, and lysine 950 contribute to the NADP(+) site.

This sequence belongs to the ATP-dependent AMP-binding enzyme family. Carboxylic acid reductase subfamily. Requires pantetheine 4'-phosphate as cofactor.

The catalysed reaction is a carboxylate + ATP + NADPH + H(+) = an aldehyde + AMP + diphosphate + NADP(+). It carries out the reaction a medium-chain fatty acid + ATP + H(+) = a medium-chain fatty acyl-AMP + diphosphate. The enzyme catalyses a long-chain fatty acid + ATP + H(+) = a long-chain fatty acyl-AMP + diphosphate. It catalyses the reaction dodecanoate + ATP + H(+) = dodecanoyl-AMP + diphosphate. The catalysed reaction is hexadecanoate + ATP + H(+) = hexadecanoyl-AMP + diphosphate. Catalyzes the ATP- and NADPH-dependent reduction of carboxylic acids to the corresponding aldehydes. In vitro, also catalyzes the activation of medium/long-chain fatty acids as acyl-adenylates (acyl-AMP). The chain is Carboxylic acid reductase from Mycobacterium tuberculosis (strain ATCC 25618 / H37Rv).